The sequence spans 1061 residues: Error-prone DNA polymerase (1061 aa).

This sequence belongs to the DNA polymerase type-C family. DnaE2 subfamily.

It is found in the cytoplasm. It carries out the reaction DNA(n) + a 2'-deoxyribonucleoside 5'-triphosphate = DNA(n+1) + diphosphate. DNA polymerase involved in damage-induced mutagenesis and translesion synthesis (TLS). It is not the major replicative DNA polymerase. The sequence is that of Error-prone DNA polymerase from Bdellovibrio bacteriovorus (strain ATCC 15356 / DSM 50701 / NCIMB 9529 / HD100).